The primary structure comprises 146 residues: Hemoglobin subunit beta-1 (146 aa).

Positions Gly2–His146 constitute a Globin domain. Residues His63 and His92 each coordinate heme b.

The protein belongs to the globin family. In terms of assembly, heterotetramer of two alpha chains and two beta chains. Red blood cells.

Its function is as follows. Involved in oxygen transport from the lung to the various peripheral tissues. The polypeptide is Hemoglobin subunit beta-1 (hbb1) (Xenopus laevis (African clawed frog)).